The sequence spans 416 residues: Vacuole membrane protein KMS1 (416 aa).

Gly-2 is modified (N-acetylglycine). The Cytoplasmic portion of the chain corresponds to 2-60 (GSAGVASSSSDVAISALREKHEKEVENLTLTTQPLNTLKLFVEATIQYIKRSISYLLAH). Residues 61 to 81 (GGWFILITTLLVVSGGLLVTV) form a helical membrane-spanning segment. At 82–101 (DGPHGKHVEEVLEYVRYGLW) the chain is on the lumenal side. The helical transmembrane segment at 102-124 (WIALGVASSIGLGSGLHTFVLYL) threads the bilayer. The Cytoplasmic segment spans residues 125-257 (GPHIALFTLK…WLLTHSQHLN (133 aa)). A helical membrane pass occupies residues 258–278 (FFTVLVLASVPNPLFDLAGIM). The Lumenal portion of the chain corresponds to 279-289 (CGQFGIPFWEF). The chain crosses the membrane as a helical span at residues 290-312 (FLATLIGKAIIKTHIQTIFIICV). The Cytoplasmic portion of the chain corresponds to 313-323 (CNNQLLDWMEN). Residues 324–344 (ELIWILSHVPGLASMLPGLTA) form a helical membrane-spanning segment. At 345-372 (KLHAMKEKYIDAPSPVPSHIKVKKWDFS) the chain is on the lumenal side. A helical transmembrane segment spans residues 373–393 (FASIWNGIVWLMLLNFFVKIV). Topologically, residues 394 to 416 (TATAQRHLKKKQEKEMATLTHSD) are cytoplasmic.

The protein belongs to the VMP1 family.

It localises to the endoplasmic reticulum membrane. Involved in the early secretory pathway. Required for the correct export of secretory products from the endoplasmic reticulum (ER) and involved in the maintenance of ER integrity. This is Vacuole membrane protein KMS1 from Arabidopsis thaliana (Mouse-ear cress).